A 106-amino-acid polypeptide reads, in one-letter code: Vacuolar ATPase assembly integral membrane protein VMA21 homolog (106 aa).

Residues 1–26 (MSNKNKKSGGAGNGAAQKQTRQQSHD) form a disordered region. The Cytoplasmic portion of the chain corresponds to 1-32 (MSNKNKKSGGAGNGAAQKQTRQQSHDSQDYSS). A helical membrane pass occupies residues 33–53 (FKIVLFYCMLIVFLPVVTFFL). The Lumenal portion of the chain corresponds to 54-69 (LKGFVLDRFFSLSEVK). A helical transmembrane segment spans residues 70–90 (VNIASAVGAVVSLHIALGLYI). At 91–106 (YRAYFGATGSKAVKED) the chain is on the cytoplasmic side.

The protein belongs to the VMA21 family.

It is found in the endoplasmic reticulum membrane. The protein resides in the endoplasmic reticulum-Golgi intermediate compartment membrane. It localises to the cytoplasmic vesicle. Its subcellular location is the COPII-coated vesicle membrane. In terms of biological role, required for the assembly of the V0 complex of the vacuolar ATPase (V-ATPase) in the endoplasmic reticulum. The polypeptide is Vacuolar ATPase assembly integral membrane protein VMA21 homolog (Drosophila ananassae (Fruit fly)).